The primary structure comprises 85 residues: Putative regulatory protein THEYE_A0405 (85 aa).

Belongs to the RemA family.

In Thermodesulfovibrio yellowstonii (strain ATCC 51303 / DSM 11347 / YP87), this protein is Putative regulatory protein THEYE_A0405.